Consider the following 329-residue polypeptide: Octaprenyl diphosphate synthase (329 aa).

The isopentenyl diphosphate site is built by K51, R54, and H83. Residues D90 and D94 each contribute to the Mg(2+) site. R99 serves as a coordination point for an all-trans-polyprenyl diphosphate. Isopentenyl diphosphate is bound at residue R100. An all-trans-polyprenyl diphosphate contacts are provided by K176, T177, and Q214.

This sequence belongs to the FPP/GGPP synthase family. The cofactor is Mg(2+).

It carries out the reaction 5 isopentenyl diphosphate + (2E,6E)-farnesyl diphosphate = all-trans-octaprenyl diphosphate + 5 diphosphate. In terms of biological role, supplies octaprenyl diphosphate, the precursor for the side chain of the isoprenoid quinones ubiquinone and menaquinone. The chain is Octaprenyl diphosphate synthase (ispB) from Haemophilus influenzae (strain ATCC 51907 / DSM 11121 / KW20 / Rd).